Here is a 484-residue protein sequence, read N- to C-terminus: Siroheme synthase 1 (484 aa).

Residues 1–205 (MHHYPIFLKL…GREAEGEAEL (205 aa)) form a precorrin-2 dehydrogenase /sirohydrochlorin ferrochelatase region. Residues 22-23 (EA) and 43-44 (PV) contribute to the NAD(+) site. S130 carries the post-translational modification Phosphoserine. The segment at 220–484 (GEVFLVGAGP…DPCWTGGMRD (265 aa)) is uroporphyrinogen-III C-methyltransferase. An S-adenosyl-L-methionine-binding site is contributed by P229. The active-site Proton acceptor is D252. The Proton donor role is filled by K274. Residues 305-307 (GGD), L310, 335-336 (SA), M387, and A416 each bind S-adenosyl-L-methionine.

In the N-terminal section; belongs to the precorrin-2 dehydrogenase / sirohydrochlorin ferrochelatase family. It in the C-terminal section; belongs to the precorrin methyltransferase family.

The catalysed reaction is uroporphyrinogen III + 2 S-adenosyl-L-methionine = precorrin-2 + 2 S-adenosyl-L-homocysteine + H(+). The enzyme catalyses precorrin-2 + NAD(+) = sirohydrochlorin + NADH + 2 H(+). It catalyses the reaction siroheme + 2 H(+) = sirohydrochlorin + Fe(2+). Its pathway is cofactor biosynthesis; adenosylcobalamin biosynthesis; precorrin-2 from uroporphyrinogen III: step 1/1. The protein operates within cofactor biosynthesis; adenosylcobalamin biosynthesis; sirohydrochlorin from precorrin-2: step 1/1. It participates in porphyrin-containing compound metabolism; siroheme biosynthesis; precorrin-2 from uroporphyrinogen III: step 1/1. It functions in the pathway porphyrin-containing compound metabolism; siroheme biosynthesis; siroheme from sirohydrochlorin: step 1/1. Its pathway is porphyrin-containing compound metabolism; siroheme biosynthesis; sirohydrochlorin from precorrin-2: step 1/1. Its function is as follows. Multifunctional enzyme that catalyzes the SAM-dependent methylations of uroporphyrinogen III at position C-2 and C-7 to form precorrin-2 via precorrin-1. Then it catalyzes the NAD-dependent ring dehydrogenation of precorrin-2 to yield sirohydrochlorin. Finally, it catalyzes the ferrochelation of sirohydrochlorin to yield siroheme. This is Siroheme synthase 1 from Halorhodospira halophila (strain DSM 244 / SL1) (Ectothiorhodospira halophila (strain DSM 244 / SL1)).